The primary structure comprises 125 residues: uncharacterized protein (125 aa).

A helical membrane pass occupies residues 21-43 (KFSLIALVSFTALAIIVLYHNIS).

The protein localises to the membrane. This is an uncharacterized protein from Archaeoglobus fulgidus (strain ATCC 49558 / DSM 4304 / JCM 9628 / NBRC 100126 / VC-16).